We begin with the raw amino-acid sequence, 542 residues long: CTP synthase (542 aa).

Residues 1 to 265 (MARYVFITGG…DSEVLSAFGI (265 aa)) form an amidoligase domain region. Serine 13 lines the CTP pocket. Position 13 (serine 13) interacts with UTP. 14–19 (SLGKGI) provides a ligand contact to ATP. Tyrosine 54 provides a ligand contact to L-glutamine. Residue aspartate 71 participates in ATP binding. Residues aspartate 71 and glutamate 139 each contribute to the Mg(2+) site. CTP contacts are provided by residues 146–148 (DIE), 186–191 (KTKPTQ), and lysine 222. UTP contacts are provided by residues 186-191 (KTKPTQ) and lysine 222. A Glutamine amidotransferase type-1 domain is found at 291–541 (TIAVVGKYTG…IEAAIEQSRL (251 aa)). Glycine 353 provides a ligand contact to L-glutamine. Cysteine 380 serves as the catalytic Nucleophile; for glutamine hydrolysis. L-glutamine is bound by residues 381-384 (FGMQ), glutamate 404, and arginine 469. Active-site residues include histidine 514 and glutamate 516.

The protein belongs to the CTP synthase family. As to quaternary structure, homotetramer.

It catalyses the reaction UTP + L-glutamine + ATP + H2O = CTP + L-glutamate + ADP + phosphate + 2 H(+). The enzyme catalyses L-glutamine + H2O = L-glutamate + NH4(+). The catalysed reaction is UTP + NH4(+) + ATP = CTP + ADP + phosphate + 2 H(+). Its pathway is pyrimidine metabolism; CTP biosynthesis via de novo pathway; CTP from UDP: step 2/2. Allosterically activated by GTP, when glutamine is the substrate; GTP has no effect on the reaction when ammonia is the substrate. The allosteric effector GTP functions by stabilizing the protein conformation that binds the tetrahedral intermediate(s) formed during glutamine hydrolysis. Inhibited by the product CTP, via allosteric rather than competitive inhibition. Its function is as follows. Catalyzes the ATP-dependent amination of UTP to CTP with either L-glutamine or ammonia as the source of nitrogen. Regulates intracellular CTP levels through interactions with the four ribonucleotide triphosphates. The protein is CTP synthase of Brucella suis (strain ATCC 23445 / NCTC 10510).